The chain runs to 338 residues: Sulfotransferase 2B1 (338 aa).

3'-phosphoadenylyl sulfate is bound at residue 67–72 (KSGTNW). Residues Trp95 and Trp100 each contribute to the substrate site. His122 serves as the catalytic Proton acceptor. 3'-phosphoadenylyl sulfate-binding positions include Arg144, Ser152, Tyr207, 241-246 (SAFAAM), and 271-273 (RKG). The segment at 301 to 338 (VQRFPWDTSEEDSSPDGQPDPEPSPSPASDDPNPGSSQ) is disordered. Low complexity predominate over residues 327–338 (PASDDPNPGSSQ).

This sequence belongs to the sulfotransferase 1 family. In terms of tissue distribution, expressed at high levels in epididymis, intestine and uterus, and low levels in brain and hypothalamus. Isoform 2 is most prominent in the brain and spinal cord, with modest expression in the lung, skin and spleen. Isoform 1 is most prominently expressed in skin and small intestine, with modest expression in muscle and prostate.

The protein localises to the cytoplasm. It localises to the cytosol. It is found in the microsome. The protein resides in the nucleus. The catalysed reaction is an alcohol + 3'-phosphoadenylyl sulfate = an alkyl sulfate + adenosine 3',5'-bisphosphate + H(+). It carries out the reaction pregnenolone + 3'-phosphoadenylyl sulfate = pregnenolone sulfate + adenosine 3',5'-bisphosphate + H(+). The enzyme catalyses 3beta-hydroxyandrost-5-en-17-one + 3'-phosphoadenylyl sulfate = dehydroepiandrosterone 3-sulfate + adenosine 3',5'-bisphosphate + H(+). It catalyses the reaction cholesterol + 3'-phosphoadenylyl sulfate = cholesterol sulfate + adenosine 3',5'-bisphosphate + H(+). Functionally, sulfotransferase that utilizes 3'-phospho-5'-adenylyl sulfate (PAPS) as sulfonate donor to catalyze the sulfate conjugation. Preferentially sulfonates cholesterol. Catalyzes sulfation of the 3beta-hydroxyl groups of steroids, such as, pregnenolone and dehydroepiandrosterone (DHEA). Cholesterol sulfation is approximately 10-fold higher than for pregnenolone and 20-fold higher than for DHEA. Plays a role in epidermal cholesterol metabolism and in the regulation of epidermal proliferation and differentiation. Strongly sulfonates pregnenolone, however is capable to sulfonate cholesterol with a high degree of efficiency. DHEA is a relatively poor substrate. The sequence is that of Sulfotransferase 2B1 (Sult2b1) from Mus musculus (Mouse).